A 213-amino-acid polypeptide reads, in one-letter code: Protein-L-isoaspartate O-methyltransferase (213 aa).

Ser-64 is a catalytic residue.

The protein belongs to the methyltransferase superfamily. L-isoaspartyl/D-aspartyl protein methyltransferase family.

The protein localises to the cytoplasm. It carries out the reaction [protein]-L-isoaspartate + S-adenosyl-L-methionine = [protein]-L-isoaspartate alpha-methyl ester + S-adenosyl-L-homocysteine. Catalyzes the methyl esterification of L-isoaspartyl residues in peptides and proteins that result from spontaneous decomposition of normal L-aspartyl and L-asparaginyl residues. It plays a role in the repair and/or degradation of damaged proteins. This Christiangramia forsetii (strain DSM 17595 / CGMCC 1.15422 / KT0803) (Gramella forsetii) protein is Protein-L-isoaspartate O-methyltransferase.